The sequence spans 352 residues: UDP-N-acetylglucosamine--N-acetylmuramyl-(pentapeptide) pyrophosphoryl-undecaprenol N-acetylglucosamine transferase (352 aa).

UDP-N-acetyl-alpha-D-glucosamine contacts are provided by residues 14-16 (TGG), Asn124, Arg164, Ser185, and Gln285.

This sequence belongs to the glycosyltransferase 28 family. MurG subfamily.

Its subcellular location is the cell inner membrane. The catalysed reaction is di-trans,octa-cis-undecaprenyl diphospho-N-acetyl-alpha-D-muramoyl-L-alanyl-D-glutamyl-meso-2,6-diaminopimeloyl-D-alanyl-D-alanine + UDP-N-acetyl-alpha-D-glucosamine = di-trans,octa-cis-undecaprenyl diphospho-[N-acetyl-alpha-D-glucosaminyl-(1-&gt;4)]-N-acetyl-alpha-D-muramoyl-L-alanyl-D-glutamyl-meso-2,6-diaminopimeloyl-D-alanyl-D-alanine + UDP + H(+). Its pathway is cell wall biogenesis; peptidoglycan biosynthesis. Its function is as follows. Cell wall formation. Catalyzes the transfer of a GlcNAc subunit on undecaprenyl-pyrophosphoryl-MurNAc-pentapeptide (lipid intermediate I) to form undecaprenyl-pyrophosphoryl-MurNAc-(pentapeptide)GlcNAc (lipid intermediate II). The sequence is that of UDP-N-acetylglucosamine--N-acetylmuramyl-(pentapeptide) pyrophosphoryl-undecaprenol N-acetylglucosamine transferase from Chlamydia trachomatis serovar A (strain ATCC VR-571B / DSM 19440 / HAR-13).